Here is a 1005-residue protein sequence, read N- to C-terminus: Ephrin type-A receptor 5 (1005 aa).

The segment at 1–24 is disordered; it reads MRGSGPRGAGRRRTQGRGGGGDTP. A signal peptide spans 1 to 26; that stretch reads MRGSGPRGAGRRRTQGRGGGGDTPRV. Topologically, residues 27 to 575 are extracellular; sequence PASLAGCYSA…GASNDQSQIP (549 aa). The Eph LBD domain maps to 62-240; that stretch reads EVNLLDSRTV…YYKKCPSVVR (179 aa). N-linked (GlcNAc...) asparagine glycosylation is found at Asn-266, Asn-301, Asn-371, Asn-425, Asn-438, and Asn-463. 2 consecutive Fibronectin type-III domains span residues 359-469 and 470-564; these read PPSA…TNQA and APSP…TTPV. A helical transmembrane segment spans residues 576–596; that stretch reads IIGVSVTVGVILLAVMIGFLL. The Cytoplasmic segment spans residues 597-1005; sequence SGSCCECGCG…MDAVAQVTLE (409 aa). Phosphotyrosine; by autocatalysis occurs at positions 652 and 658. In terms of domain architecture, Protein kinase spans 677–938; the sequence is ITIERVIGAG…DIVNMLDKLI (262 aa). ATP contacts are provided by residues 683-691 and Lys-709; that span reads IGAGEFGEV. Asp-802 serves as the catalytic Proton acceptor. A phosphotyrosine; by autocatalysis mark is found at Tyr-835 and Tyr-984. The region spanning 967–1005 is the SAM domain; that stretch reads GAYRSVGEWLEATKMGRYTEIFMENGYSSMDAVAQVTLE.

The protein belongs to the protein kinase superfamily. Tyr protein kinase family. Ephrin receptor subfamily. As to quaternary structure, heterotetramer upon binding of the ligand. The heterotetramer is composed of an ephrin dimer and a receptor dimer. Oligomerization is probably required to induce biological responses. Interacts (via SAM domain) with SAMD5 (via SAM domain). In terms of processing, phosphorylated. Phosphorylation is stimulated by the ligand EFNA5. Dephosphorylation upon stimulation by glucose, inhibits EPHA5 forward signaling and results in insulin secretion. Almost exclusively expressed in the nervous system. Predominantly expressed in neurons.

It localises to the cell membrane. The protein localises to the cell projection. The protein resides in the axon. It is found in the dendrite. It catalyses the reaction L-tyrosyl-[protein] + ATP = O-phospho-L-tyrosyl-[protein] + ADP + H(+). In terms of biological role, receptor tyrosine kinase which binds promiscuously GPI-anchored ephrin-A family ligands residing on adjacent cells, leading to contact-dependent bidirectional signaling into neighboring cells. The signaling pathway downstream of the receptor is referred to as forward signaling while the signaling pathway downstream of the ephrin ligand is referred to as reverse signaling. Among GPI-anchored ephrin-A ligands, EFNA5 most probably constitutes the cognate/functional ligand for EPHA5. Functions as an axon guidance molecule during development and may be involved in the development of the retinotectal, entorhino-hippocampal and hippocamposeptal pathways. Together with EFNA5 plays also a role in synaptic plasticity in adult brain through regulation of synaptogenesis. In addition to its function in the nervous system, the interaction of EPHA5 with EFNA5 mediates communication between pancreatic islet cells to regulate glucose-stimulated insulin secretion. This chain is Ephrin type-A receptor 5 (Epha5), found in Rattus norvegicus (Rat).